The chain runs to 169 residues: UPF0303 protein BruAb1_1406 (169 aa).

It belongs to the UPF0303 family.

This Brucella abortus biovar 1 (strain 9-941) protein is UPF0303 protein BruAb1_1406.